The following is a 288-amino-acid chain: Anthranilate synthase beta subunit 1, chloroplastic (288 aa).

The N-terminal 58 residues, 1 to 58 (MACSHLAAAAAAASPAAARSPAASSAATASAFARLSATPRVASGGLAVRGQRGVAAVV), are a transit peptide targeting the chloroplast. A Glutamine amidotransferase type-1 domain is found at 83–282 (PIIVIDNYDS…VRFIEELEKQ (200 aa)). 134-136 (GPG) provides a ligand contact to L-glutamine. The active-site Nucleophile is C161. L-glutamine contacts are provided by residues Q165 and 215–216 (SL). Active-site residues include H256 and E258.

Heterotetramer consisting of two non-identical subunits: a beta subunit and a large alpha subunit. In terms of tissue distribution, expressed in roots and leaves.

The protein localises to the plastid. The protein resides in the chloroplast. It catalyses the reaction chorismate + L-glutamine = anthranilate + pyruvate + L-glutamate + H(+). It participates in amino-acid biosynthesis; L-tryptophan biosynthesis; L-tryptophan from chorismate: step 1/5. Functionally, part of a heterotetrameric complex that catalyzes the two-step biosynthesis of anthranilate, an intermediate in the biosynthesis of L-tryptophan. In the first step, the glutamine-binding beta subunit of anthranilate synthase (AS) provides the glutamine amidotransferase activity which generates ammonia as a substrate that, along with chorismate, is used in the second step, catalyzed by the large alpha subunit of AS to produce anthranilate. In Oryza sativa subsp. japonica (Rice), this protein is Anthranilate synthase beta subunit 1, chloroplastic.